Consider the following 1356-residue polypeptide: Transmembrane protein 94 (1356 aa).

Residues 1 to 64 (MDLKEKHLGE…FLHHSNRCSC (64 aa)) are Cytoplasmic-facing. A helical membrane pass occupies residues 65–85 (FHWPGASLMLLAVLLLLGCCG). The Lumenal portion of the chain corresponds to 86–92 (GQPAGSR). The chain crosses the membrane as a helical span at residues 93-113 (GVGLVNASALFLLLLLNLVLI). The Cytoplasmic segment spans residues 114 to 273 (GRQDRLKRRE…RPVTALDNER (160 aa)). 2 positions are modified to phosphoserine: Ser221 and Ser225. The chain crosses the membrane as a helical span at residues 274-294 (FTVQSVMLHYAVPVVLAGFLI). At 295 to 320 (TNALRFIFSAPGVTSWQYTLLQLQVN) the chain is on the lumenal side. A helical membrane pass occupies residues 321–341 (GVLPILPLLFPVLWVLATACG). Residues 342–1092 (EARVLAQMSK…RHATYGIRKC (751 aa)) lie on the Cytoplasmic side of the membrane. A DKQGIL motif is present at residues 417–422 (DKQGIL). Disordered stretches follow at residues 439 to 461 (VEPP…FCHP) and 483 to 541 (EQER…ESDP). The span at 440–449 (EPPHSSHEDL) shows a compositional bias: basic and acidic residues. 3 positions are modified to phosphoserine: Ser444, Ser445, and Ser454. Residues 502–511 (HHKAHGRSKH) show a composition bias toward basic residues. Residues Ser513, Ser518, Ser798, and Ser941 each carry the phosphoserine modification. A helical transmembrane segment spans residues 1093-1113 (FLFLLQCQLTLVVIQFLSCLV). The Lumenal portion of the chain corresponds to 1114 to 1120 (QLPPLLS). Residues 1121-1141 (TTDILWLSCFCYPLLSISLLG) form a helical membrane-spanning segment. Residues 1142-1167 (KPPHSSIMSMATGKNLQSIPKKTQHY) lie on the Cytoplasmic side of the membrane. The helical transmembrane segment at 1168-1188 (FLLCFLLKFSLTISSCLICFG) threads the bilayer. The Lumenal segment spans residues 1189–1228 (FTLQSFCDSSRDRNLTNCSSVMLPSNDDRAPAWFEDFANG). Asn1202 and Asn1205 each carry an N-linked (GlcNAc...) asparagine glycan. The chain crosses the membrane as a helical span at residues 1229 to 1249 (LLSAQKLTAALIVLHTVFISI). Over 1250-1261 (THVHRTKPLWRK) the chain is Cytoplasmic. Residues 1262 to 1282 (SPLTNLWWAVTVPVVLLGQVV) traverse the membrane as a helical segment. Over 1283 to 1306 (QTAVDLQLWTHRDSHVHFGLEDVP) the chain is Lumenal. A helical membrane pass occupies residues 1307 to 1327 (LLTWLLGCLSLVLVVVTNEIV). The Cytoplasmic portion of the chain corresponds to 1328-1356 (KLHEIRVRVRYQKRQKLQFETKLGMNSPF). Positions 1351–1353 (GMN) match the GMN; metal-binding motif motif.

In terms of assembly, forms homooligomers. Expressed ubiquitously.

The protein localises to the endoplasmic reticulum membrane. In terms of biological role, could function in the uptake of Mg(2+) from the cytosol into the endoplasmic reticulum and regulate intracellular Mg(2+) homeostasis. The polypeptide is Transmembrane protein 94 (Homo sapiens (Human)).